A 493-amino-acid polypeptide reads, in one-letter code: Glutamyl-tRNA(Gln) amidotransferase subunit A (493 aa).

Active-site charge relay system residues include K79 and S159. The Acyl-ester intermediate role is filled by S183.

Belongs to the amidase family. GatA subfamily. In terms of assembly, heterotrimer of A, B and C subunits.

It catalyses the reaction L-glutamyl-tRNA(Gln) + L-glutamine + ATP + H2O = L-glutaminyl-tRNA(Gln) + L-glutamate + ADP + phosphate + H(+). Functionally, allows the formation of correctly charged Gln-tRNA(Gln) through the transamidation of misacylated Glu-tRNA(Gln) in organisms which lack glutaminyl-tRNA synthetase. The reaction takes place in the presence of glutamine and ATP through an activated gamma-phospho-Glu-tRNA(Gln). The chain is Glutamyl-tRNA(Gln) amidotransferase subunit A from Brucella anthropi (strain ATCC 49188 / DSM 6882 / CCUG 24695 / JCM 21032 / LMG 3331 / NBRC 15819 / NCTC 12168 / Alc 37) (Ochrobactrum anthropi).